Here is a 42-residue protein sequence, read N- to C-terminus: Ostricacin-4 (42 aa).

3 disulfides stabilise this stretch: Cys-8-Cys-36, Cys-15-Cys-30, and Cys-20-Cys-37.

Its subcellular location is the secreted. Has antibacterial activity against the Gram-positive bacterium S.aureus 1056 MRSA (MIC=11.48 ug/ml) and the Gram-negative bacterium E.coli O157:H7 (MIC=12.03 ug/ml). Does not have antifungal activity against the yeast C.albicans 3153A. This is Ostricacin-4 from Struthio camelus (Common ostrich).